A 77-amino-acid polypeptide reads, in one-letter code: MPKRVLQGVVISSKADKTVTVKVERKFKHPIYKKFVKVSKKYAAHDSENKYQEGDKVSIIESRPISKTKTWVVVNGE.

It belongs to the universal ribosomal protein uS17 family. As to quaternary structure, part of the 30S ribosomal subunit.

One of the primary rRNA binding proteins, it binds specifically to the 5'-end of 16S ribosomal RNA. In Rickettsia conorii (strain ATCC VR-613 / Malish 7), this protein is Small ribosomal subunit protein uS17.